The chain runs to 264 residues: MAAAAVARLWWRGILGASALTRGTGRPSVLLLPVRRESAGADTRPTVRPRNDVAHKQLSAFGEYVAEILPKYVQQVQVSCFNELEVCIHPDGVIPVLTFLRDHTNAQFKSLVDLTAVDVPTRQNRFEIVYNLLSLRFNSRIRVKTYTDELTPIESAVSVFKAANWYEREIWDMFGVFFANHPDLRRILTDYGFEGHPFRKDFPLSGYVELRYDDEVKRVVAEPVELAQEFRKFDLNSPWEAFPVYRQPPESLKLEAGDKKPDAK.

Residues 1 to 36 (MAAAAVARLWWRGILGASALTRGTGRPSVLLLPVRR) constitute a mitochondrion transit peptide.

Belongs to the complex I 30 kDa subunit family. As to quaternary structure, core subunit of respiratory chain NADH dehydrogenase (Complex I) which is composed of 45 different subunits. Interacts with NDUFAF3. Interacts with RAB5IF. Found in subcomplexes containing subunits NDUFS2, MT-ND1 and NDUFA13.

It localises to the mitochondrion inner membrane. The enzyme catalyses a ubiquinone + NADH + 5 H(+)(in) = a ubiquinol + NAD(+) + 4 H(+)(out). In terms of biological role, core subunit of the mitochondrial membrane respiratory chain NADH dehydrogenase (Complex I) which catalyzes electron transfer from NADH through the respiratory chain, using ubiquinone as an electron acceptor. Essential for the catalytic activity and assembly of complex I. The sequence is that of NADH dehydrogenase [ubiquinone] iron-sulfur protein 3, mitochondrial (NDUFS3) from Homo sapiens (Human).